We begin with the raw amino-acid sequence, 168 residues long: Putative gustatory receptor clone PTE03 (168 aa).

At T1–Q25 the chain is on the extracellular side. C22 and C104 form a disulfide bridge. The chain crosses the membrane as a helical span at residues L26 to Y45. Residues D46–L67 lie on the Cytoplasmic side of the membrane. The chain crosses the membrane as a helical span at residues V68–I88. At L89–N121 the chain is on the extracellular side. A helical membrane pass occupies residues I122–Y143. The Cytoplasmic portion of the chain corresponds to F144 to T165. Residues C166 to S168 traverse the membrane as a helical segment.

Belongs to the G-protein coupled receptor 1 family. In terms of tissue distribution, tongue specific.

The protein resides in the cell membrane. Its function is as follows. Possible taste receptor. The sequence is that of Putative gustatory receptor clone PTE03 (Olr1145) from Rattus norvegicus (Rat).